We begin with the raw amino-acid sequence, 321 residues long: Aspartate carbamoyltransferase catalytic subunit (321 aa).

Carbamoyl phosphate contacts are provided by Arg65 and Thr66. Residue Lys93 participates in L-aspartate binding. Arg115, His143, and Gln146 together coordinate carbamoyl phosphate. L-aspartate is bound by residues Arg176 and Arg230. Carbamoyl phosphate-binding residues include Gly271 and Pro272.

Belongs to the aspartate/ornithine carbamoyltransferase superfamily. ATCase family. As to quaternary structure, heterododecamer (2C3:3R2) of six catalytic PyrB chains organized as two trimers (C3), and six regulatory PyrI chains organized as three dimers (R2).

It carries out the reaction carbamoyl phosphate + L-aspartate = N-carbamoyl-L-aspartate + phosphate + H(+). It functions in the pathway pyrimidine metabolism; UMP biosynthesis via de novo pathway; (S)-dihydroorotate from bicarbonate: step 2/3. Catalyzes the condensation of carbamoyl phosphate and aspartate to form carbamoyl aspartate and inorganic phosphate, the committed step in the de novo pyrimidine nucleotide biosynthesis pathway. The protein is Aspartate carbamoyltransferase catalytic subunit of Bartonella tribocorum (strain CIP 105476 / IBS 506).